A 403-amino-acid polypeptide reads, in one-letter code: Phosphopentomutase (403 aa).

Residues Asp13, Asp298, His303, Asp339, His340, and His351 each coordinate Mn(2+).

Belongs to the phosphopentomutase family. Requires Mn(2+) as cofactor.

It localises to the cytoplasm. The enzyme catalyses 2-deoxy-alpha-D-ribose 1-phosphate = 2-deoxy-D-ribose 5-phosphate. The catalysed reaction is alpha-D-ribose 1-phosphate = D-ribose 5-phosphate. It functions in the pathway carbohydrate degradation; 2-deoxy-D-ribose 1-phosphate degradation; D-glyceraldehyde 3-phosphate and acetaldehyde from 2-deoxy-alpha-D-ribose 1-phosphate: step 1/2. Its function is as follows. Isomerase that catalyzes the conversion of deoxy-ribose 1-phosphate (dRib-1-P) and ribose 1-phosphate (Rib-1-P) to deoxy-ribose 5-phosphate (dRib-5-P) and ribose 5-phosphate (Rib-5-P), respectively. This is Phosphopentomutase from Streptococcus pyogenes serotype M28 (strain MGAS6180).